Consider the following 257-residue polypeptide: AN1-type zinc finger protein 2B (257 aa).

2 AN1-type zinc fingers span residues Pro4–Ile52 and Lys94–Ser142. Positions 10, 15, 25, 28, 33, 36, 42, 44, 100, 105, 115, 118, 123, 126, 132, and 134 each coordinate Zn(2+). Residues Thr141–Arg151 form a VCP/p97-interacting motif (VIM) region. The interval Gln153–Pro187 is disordered. A compositionally biased stretch (polar residues) spans Val155–Cys171. Residues Ser163 and Ser173 each carry the phosphoserine modification. Positions Thr172–Ala186 are enriched in low complexity. UIM domains are found at residues Ser197–Gln216 and Gln221–Gln240. A Cysteine methyl ester modification is found at Cys254. The S-geranylgeranyl cysteine moiety is linked to residue Cys254. Residues Cys254–Cys257 carry the CAAX motif motif. Positions Ser255–Cys257 are cleaved as a propeptide — removed in mature form.

As to quaternary structure, binds 'Lys-48'-linked polyubiquitin chains of ubiquitinated proteins. Associates with the proteasome complex; upon exposure to arsenite. Interacts (via VIM motif) with VCP; the interaction is direct. Interacts with BAG6. Interacts with IGF1R (nascent precursor form). Interacts with DERL1, FAF2, NPLOC4 and UFD1; probably through VCP. In terms of processing, phosphorylated by MAPK14. Phosphorylation has no effect on association with the proteasome complex.

The protein resides in the endoplasmic reticulum membrane. Its function is as follows. Plays a role in protein homeostasis by regulating both the translocation and the ubiquitin-mediated proteasomal degradation of nascent proteins at the endoplasmic reticulum. It is involved in the regulation of signal-mediated translocation of proteins into the endoplasmic reticulum. It also plays a role in the ubiquitin-mediated proteasomal degradation of proteins for which signal-mediated translocation to the endoplasmic reticulum has failed. May therefore function in the endoplasmic reticulum stress-induced pre-emptive quality control, a mechanism that selectively attenuates the translocation of newly synthesized proteins into the endoplasmic reticulum and reroutes them to the cytosol for proteasomal degradation. By controlling the steady-state expression of the IGF1R receptor, indirectly regulates the insulin-like growth factor receptor signaling pathway. The protein is AN1-type zinc finger protein 2B of Homo sapiens (Human).